Consider the following 359-residue polypeptide: SAGA complex subunit Spt7 (359 aa).

In terms of assembly, component of the Spt-Ada-Gcn5 acetyltransferase (SAGA) complex consisting of wda/Taf5L, Saf6, Taf9, Taf10b, Taf12, Ada1, Spt3, Spt7, Spt20, Sf3b3, Sf3b5, Nipped-A/Tra1, a histone acetyltransferase (HAT) module made up of Gcn5, Ada2b (Isoform B), Ada3 and Sgf29, and a deubiquitinase (DUB) module made up of not/nonstop, Sgf11 and e(y)2 tethered to SAGA by Atxn7. Interacts with Ada2b; the interaction is direct.

It is found in the nucleus. In terms of biological role, component of the transcription regulatory complex SAGA, a multiprotein complex that activates transcription by remodeling chromatin and mediating histone acetylation and deubiquitination. The SAGA complex predominantly acetylates histone H3. In Drosophila melanogaster (Fruit fly), this protein is SAGA complex subunit Spt7.